Reading from the N-terminus, the 419-residue chain is Tyrosine--tRNA ligase 2 (419 aa).

Tyrosine 34 lines the L-tyrosine pocket. Residues 39 to 48 (PTGDSMHIGH) carry the 'HIGH' region motif. Residues tyrosine 168 and glutamine 172 each contribute to the L-tyrosine site. A 'KMSKS' region motif is present at residues 230-234 (KFGKS). An ATP-binding site is contributed by lysine 233. One can recognise an S4 RNA-binding domain in the interval 352–418 (KNIVEWLVDL…GKKNYSLVKL (67 aa)).

This sequence belongs to the class-I aminoacyl-tRNA synthetase family. TyrS type 1 subfamily. In terms of assembly, homodimer.

Its subcellular location is the cytoplasm. The enzyme catalyses tRNA(Tyr) + L-tyrosine + ATP = L-tyrosyl-tRNA(Tyr) + AMP + diphosphate + H(+). Its function is as follows. Catalyzes the attachment of tyrosine to tRNA(Tyr) in a two-step reaction: tyrosine is first activated by ATP to form Tyr-AMP and then transferred to the acceptor end of tRNA(Tyr). The protein is Tyrosine--tRNA ligase 2 of Bacillus cereus (strain ZK / E33L).